The primary structure comprises 279 residues: Pantothenate synthetase (279 aa).

31 to 38 is an ATP binding site; it reads MGALHEGH. The active-site Proton donor is H38. Position 62 (Q62) interacts with (R)-pantoate. A beta-alanine-binding site is contributed by Q62. 148–151 serves as a coordination point for ATP; sequence GEKD. A (R)-pantoate-binding site is contributed by Q154. ATP-binding positions include V177 and 185–188; that span reads LSSR.

Belongs to the pantothenate synthetase family. Homodimer.

Its subcellular location is the cytoplasm. The enzyme catalyses (R)-pantoate + beta-alanine + ATP = (R)-pantothenate + AMP + diphosphate + H(+). The protein operates within cofactor biosynthesis; (R)-pantothenate biosynthesis; (R)-pantothenate from (R)-pantoate and beta-alanine: step 1/1. Its function is as follows. Catalyzes the condensation of pantoate with beta-alanine in an ATP-dependent reaction via a pantoyl-adenylate intermediate. The sequence is that of Pantothenate synthetase from Cereibacter sphaeroides (strain ATCC 17029 / ATH 2.4.9) (Rhodobacter sphaeroides).